The sequence spans 193 residues: Ion-translocating oxidoreductase complex subunit A (193 aa).

The next 6 helical transmembrane spans lie at L5–L25, A38–L58, A65–V85, V102–L122, I134–M154, and A171–V191.

This sequence belongs to the NqrDE/RnfAE family. As to quaternary structure, the complex is composed of six subunits: RnfA, RnfB, RnfC, RnfD, RnfE and RnfG.

Its subcellular location is the cell inner membrane. Functionally, part of a membrane-bound complex that couples electron transfer with translocation of ions across the membrane. The polypeptide is Ion-translocating oxidoreductase complex subunit A (Hahella chejuensis (strain KCTC 2396)).